The following is a 451-amino-acid chain: MRECISIHVGQAGVQIGNACWELYCLEHGIQPDGQMPSDKTIGGGDDSFNTFFSETGAGKHVPRAVFVDLEPTVIDEVRTGTYRQLFHPEQLITGKEDAANNYARGHYTIGKEIIDLVLDRIRKLADQCTGLQGFLVFHSFGGGTGSGFTSLLMERLSVDYGKKSKLEFSIYPAPQVSTAVVEPYNSILTTHTTLEHSDCAFMVDNEAIYDICRRNLDIERPTYTNLNRLIGQIVSSITASLRFDGALNVDLTEFQTNLVPYPRIHFPLATYAPVISAEKAYHEQLSVAEITNACFEPANQMVKCDPRHGKYMACCLLYRGDVVPKDVNAAIATIKTKRTIQFVDWCPTGFKVGINYQPPTVVPGGDLAKVQRAVCMLSNTTAIAEAWARLDHKFDLMYAKRAFVHWYVGEGMEEGEFSEAREDMAALEKDYEEVGVDSVEGEGEEEGEEY.

Residues 1–4 carry the MREC motif motif; that stretch reads MREC. The GTP site is built by Gln11, Glu71, Ser140, Gly144, Thr145, Thr179, Asn206, and Asn228. Residue Glu71 coordinates Mg(2+). Glu254 is a catalytic residue. Positions 432 to 451 are disordered; sequence YEEVGVDSVEGEGEEEGEEY. Glu445 is subject to 5-glutamyl polyglutamate.

It belongs to the tubulin family. As to quaternary structure, dimer of alpha and beta chains. A typical microtubule is a hollow water-filled tube with an outer diameter of 25 nm and an inner diameter of 15 nM. Alpha-beta heterodimers associate head-to-tail to form protofilaments running lengthwise along the microtubule wall with the beta-tubulin subunit facing the microtubule plus end conferring a structural polarity. Microtubules usually have 13 protofilaments but different protofilament numbers can be found in some organisms and specialized cells. Mg(2+) is required as a cofactor. Post-translationally, some glutamate residues at the C-terminus are polyglycylated, resulting in polyglycine chains on the gamma-carboxyl group. Glycylation is mainly limited to tubulin incorporated into axonemes (cilia and flagella) whereas glutamylation is prevalent in neuronal cells, centrioles, axonemes, and the mitotic spindle. Both modifications can coexist on the same protein on adjacent residues, and lowering polyglycylation levels increases polyglutamylation, and reciprocally. The precise function of polyglycylation is still unclear. In terms of processing, some glutamate residues at the C-terminus are polyglutamylated, resulting in polyglutamate chains on the gamma-carboxyl group. Polyglutamylation plays a key role in microtubule severing by spastin (SPAST). SPAST preferentially recognizes and acts on microtubules decorated with short polyglutamate tails: severing activity by SPAST increases as the number of glutamates per tubulin rises from one to eight, but decreases beyond this glutamylation threshold. Undergoes a tyrosination/detyrosination cycle, the cyclic removal and re-addition of a C-terminal tyrosine residue by the enzymes tubulin tyrosine carboxypeptidase (MATCAP1, VASH1 or VASH2) and tubulin tyrosine ligase (TTL), respectively. Post-translationally, tyrosination promotes microtubule interaction with CAP-Gly microtubule plus-end tracking proteins. Tyrosinated tubulins regulate the initiation of dynein-driven motility. In terms of processing, detyrosination is involved in metaphase plate congression by guiding chromosomes during mitosis. Detyrosination increases microtubules-dependent mechanotransduction in dystrophic cardiac and skeletal muscle. In cardiomyocytes, detyrosinated microtubules are required to resist to contractile compression during contraction.

It localises to the cytoplasm. Its subcellular location is the cytoskeleton. The catalysed reaction is GTP + H2O = GDP + phosphate + H(+). Tubulin is the major constituent of microtubules, a cylinder consisting of laterally associated linear protofilaments composed of alpha- and beta-tubulin heterodimers. Microtubules grow by the addition of GTP-tubulin dimers to the microtubule end, where a stabilizing cap forms. Below the cap, tubulin dimers are in GDP-bound state, owing to GTPase activity of alpha-tubulin. This Gallus gallus (Chicken) protein is Tubulin alpha-1A chain (TUBA1A).